The sequence spans 647 residues: DNA mismatch repair protein MutL (647 aa).

The protein belongs to the DNA mismatch repair MutL/HexB family.

Its function is as follows. This protein is involved in the repair of mismatches in DNA. It is required for dam-dependent methyl-directed DNA mismatch repair. May act as a 'molecular matchmaker', a protein that promotes the formation of a stable complex between two or more DNA-binding proteins in an ATP-dependent manner without itself being part of a final effector complex. The polypeptide is DNA mismatch repair protein MutL (Koribacter versatilis (strain Ellin345)).